We begin with the raw amino-acid sequence, 293 residues long: Probable metal transport system membrane protein TC_0698 (293 aa).

The next 7 membrane-spanning stretches (helical) occupy residues 18–38 (SLLA…YIVV), 41–61 (IVSI…IALW), 68–88 (LPIS…ICIG), 101–121 (IISM…SKLP), 142–162 (DLYF…ICHT), 186–206 (FLLL…MGVI), and 242–262 (FLGI…IAIL).

This sequence belongs to the ABC-3 integral membrane protein family.

It is found in the cell inner membrane. Part of an ATP-driven transport system TC_0696/TC_0697/TC_0698 for a metal. The protein is Probable metal transport system membrane protein TC_0698 of Chlamydia muridarum (strain MoPn / Nigg).